The primary structure comprises 268 residues: Hydroxyethylthiazole kinase (268 aa).

Met45 is a substrate binding site. Residues Arg121 and Thr167 each contribute to the ATP site. Gly194 is a substrate binding site.

The protein belongs to the Thz kinase family. Requires Mg(2+) as cofactor.

The enzyme catalyses 5-(2-hydroxyethyl)-4-methylthiazole + ATP = 4-methyl-5-(2-phosphooxyethyl)-thiazole + ADP + H(+). It functions in the pathway cofactor biosynthesis; thiamine diphosphate biosynthesis; 4-methyl-5-(2-phosphoethyl)-thiazole from 5-(2-hydroxyethyl)-4-methylthiazole: step 1/1. In terms of biological role, catalyzes the phosphorylation of the hydroxyl group of 4-methyl-5-beta-hydroxyethylthiazole (THZ). This chain is Hydroxyethylthiazole kinase, found in Bacillus thuringiensis subsp. konkukian (strain 97-27).